A 197-amino-acid polypeptide reads, in one-letter code: dTTP/UTP pyrophosphatase (197 aa).

D70 functions as the Proton acceptor in the catalytic mechanism.

It belongs to the Maf family. YhdE subfamily. A divalent metal cation is required as a cofactor.

It localises to the cytoplasm. It catalyses the reaction dTTP + H2O = dTMP + diphosphate + H(+). The enzyme catalyses UTP + H2O = UMP + diphosphate + H(+). In terms of biological role, nucleoside triphosphate pyrophosphatase that hydrolyzes dTTP and UTP. May have a dual role in cell division arrest and in preventing the incorporation of modified nucleotides into cellular nucleic acids. This chain is dTTP/UTP pyrophosphatase, found in Methanosarcina barkeri (strain Fusaro / DSM 804).